Consider the following 369-residue polypeptide: UPF0284 protein cce_1085 (369 aa).

The protein belongs to the UPF0284 family.

The polypeptide is UPF0284 protein cce_1085 (Crocosphaera subtropica (strain ATCC 51142 / BH68) (Cyanothece sp. (strain ATCC 51142))).